We begin with the raw amino-acid sequence, 61 residues long: Three-finger hemachatoxin (61 aa).

Disulfide bonds link Cys-3/Cys-22, Cys-15/Cys-39, Cys-43/Cys-54, and Cys-55/Cys-60.

It belongs to the three-finger toxin family. Short-chain subfamily. Type IB cytotoxin sub-subfamily. Expressed by the venom gland.

The protein resides in the secreted. Its function is as follows. This protein lyses red blood cells and has cardiotoxic and hypotensive activities. The sequence is that of Three-finger hemachatoxin from Hemachatus haemachatus (Rinkhals).